A 99-amino-acid polypeptide reads, in one-letter code: METLSFEFPAGQPPKGRALVGVVGSGDLEVLLEPGKPGTLSIQVVTSVNGAALRWQHLFERMFDGQTPPALSIDIHDFGATPGVVRMRLEQGFEEIGHD.

The residue at position 25 (Ser-25) is an O-(phosphoribosyl dephospho-coenzyme A)serine.

This sequence belongs to the MdcC family. Post-translationally, covalently binds the prosthetic group of malonate decarboxylase.

It localises to the cytoplasm. Functionally, subunit of malonate decarboxylase, it is an acyl carrier protein to which acetyl and malonyl thioester residues are bound via a 2'-(5''-phosphoribosyl)-3'-dephospho-CoA prosthetic group and turn over during the catalytic mechanism. This is Malonate decarboxylase acyl carrier protein from Pseudomonas syringae pv. syringae (strain B728a).